The sequence spans 76 residues: Serine proteinase inhibitor IA-2 (76 aa).

At S1 the chain carries N-acetylserine.

The protein belongs to the protease inhibitor I9 family.

Functionally, specifically inhibits an intracellular serine proteinase (proteinase A). This is Serine proteinase inhibitor IA-2 from Pleurotus ostreatus (Oyster mushroom).